The primary structure comprises 430 residues: Peptidoglycan DD-endopeptidase ShyA (430 aa).

Residues 1-35 (MISKSIILRFSELSMRKKATLVGLPLLAVAAISSS) form the signal peptide. 3 residues coordinate Zn(2+): His-297, Asp-301, and His-378.

The protein belongs to the peptidase M23B family. It depends on Zn(2+) as a cofactor.

It is found in the periplasm. The protein operates within cell wall degradation; peptidoglycan degradation. Its activity is regulated as follows. Reduced activity in 0.5 mM EDTA and a complete loss of activity at higher EDTA concentrations. The effect of EDTA can be reversed by addition of 1 mM ZnCl(2). Conformational switching between open (catalytically active) and closed (catalytically inactive) conformation of this protein is suggested mechanism of its regulation. The signal or inducer of the conformational shift to the open form unmasking the active site is currently not understood. Functionally, cell wall peptidoglycan (PG) DD-endopeptidase essential for cell growth and elongation. Hydrolyzes peptide cross-links which covalently connect adjacent PG strands probably to allow insertion of new glycans and thus cell wall expansion. Degrades purified whole PG sacculi in vitro. Releases predominantly short glycan chains from the PG. Cleaves D,D cross-linked muropeptides specifically preferring dimeric tetrapeptide-tetrapeptide (D44) substrates and has only little activity on dimeric tetrapeptide-pentapeptide (D45) substrates. Also converts more than 50% of tetrapeptide-tripeptide (D43) to product as well as more than 50% of D43M, which contains D-Met instead of D-Ala in the fourth position of the acceptor moiety. Cleaves the D,D bond between diaminopimelic acid (DAP) and D-Ala of the PG substrate in vitro. No cleavage of L,D bond connecting two DAP moieties. This chain is Peptidoglycan DD-endopeptidase ShyA, found in Vibrio cholerae serotype O1 (strain ATCC 39315 / El Tor Inaba N16961).